The chain runs to 440 residues: Transposon Ty1-JR1 Gag polyprotein (440 aa).

Residues 1 to 16 (MESQQLSQHSHISHGS) are compositionally biased toward low complexity. Disordered regions lie at residues 1–93 (MESQ…MMTQ), 126–173 (PQSQ…RPPP), and 352–440 (GSRN…PGTY). 2 stretches are compositionally biased toward polar residues: residues 48–60 (TKAN…TPAS) and 127–152 (QSQF…GNTF). The span at 153–165 (TDSSSADSDMTST) shows a compositional bias: low complexity. An RNA-binding region spans residues 299–401 (NNGIHINNKV…NSKSKTARAH (103 aa)). Positions 402–418 (NVSTSNNSPSTDNDSIS) are enriched in low complexity. Residue serine 416 is modified to Phosphoserine. Polar residues predominate over residues 419–428 (KSTTEPIQLN). Positions 429-440 (NKHDLHLRPGTY) are enriched in basic and acidic residues.

As to quaternary structure, homotrimer.

It localises to the cytoplasm. Functionally, capsid protein (CA) is the structural component of the virus-like particle (VLP), forming the shell that encapsulates the retrotransposons dimeric RNA genome. The particles are assembled from trimer-clustered units and there are holes in the capsid shells that allow for the diffusion of macromolecules. CA also has nucleocapsid-like chaperone activity, promoting primer tRNA(i)-Met annealing to the multipartite primer-binding site (PBS), dimerization of Ty1 RNA and initiation of reverse transcription. The protein is Transposon Ty1-JR1 Gag polyprotein (TY1A-JR1) of Saccharomyces cerevisiae (strain ATCC 204508 / S288c) (Baker's yeast).